Consider the following 451-residue polypeptide: Vacuolar cation/proton exchanger 1a (451 aa).

Topologically, residues 1–58 are cytoplasmic; that stretch reads MEAAAAMEAGRKLAARHPHGRSRTAHNMSSSSLRKKSDAALVRKVPVAPLRPLLANLQ. Positions 9 to 37 are disordered; the sequence is AGRKLAARHPHGRSRTAHNMSSSSLRKKS. A compositionally biased stretch (basic residues) spans 13 to 24; it reads LAARHPHGRSRT. The chain crosses the membrane as a helical span at residues 59 to 79; the sequence is EVFLATKLAVLFPAVPLAIAA. Residues 80–86 are Vacuolar-facing; the sequence is QCFRFDQ. A helical transmembrane segment spans residues 87–107; it reads VWVFALSLLGLIPLAERVSFL. The Cytoplasmic portion of the chain corresponds to 108–120; it reads TEQIALYTGPTVG. Residues 121–141 form a helical membrane-spanning segment; sequence GLLNATCGNATELIIALFALL. Residues 128–163 form a cation selection region; that stretch reads GNATELIIALFALLKGKIEVVKCSLLGSVLSNLLLV. Over 142 to 153 the chain is Vacuolar; that stretch reads KGKIEVVKCSLL. The chain crosses the membrane as a helical span at residues 154 to 174; sequence GSVLSNLLLVLGTSLFCGGVV. Residues 175 to 191 are Cytoplasmic-facing; sequence NLGARQPYDRNQSDVST. Residues 192-212 form a helical membrane-spanning segment; that stretch reads ALLFLAVLCHSAPLLLRYAVA. Residues 213 to 228 are Vacuolar-facing; it reads AGEHSVSATSAAASLD. The chain crosses the membrane as a helical span at residues 229 to 249; it reads LSRACSFVMLASYVAYLFFQL. Residues 250 to 273 lie on the Cytoplasmic side of the membrane; sequence KTHRQLFEPQEVDGGDAGDDDEEP. Residues 274–294 traverse the membrane as a helical segment; that stretch reads ALGFASALFWLALMTAVISVL. The Vacuolar portion of the chain corresponds to 295–317; it reads SEYVVGTIEPTSQSWGLSVSFIS. Residues 318–338 form a helical membrane-spanning segment; the sequence is IILLPIVGNAAEHAGAIIFAL. A cation selection region spans residues 325–360; the sequence is GNAAEHAGAIIFALKNKLDITLGVALGSATQISMFV. Topologically, residues 339-352 are cytoplasmic; the sequence is KNKLDITLGVALGS. A helical transmembrane segment spans residues 353 to 373; sequence ATQISMFVVPLSVLVAWIMGV. At 374 to 378 the chain is on the vacuolar side; sequence QMDLD. Residues 379–399 traverse the membrane as a helical segment; it reads FKLLETGSLFMAVLVTAFTLQ. Topologically, residues 400-404 are cytoplasmic; it reads DGTSH. Residues 405–425 traverse the membrane as a helical segment; it reads YLKGILLLLCYIVIGACFFVA. Topologically, residues 426 to 451 are vacuolar; that stretch reads RQPAGHANSNGALLDVPTGSMSVQAA.

The protein belongs to the Ca(2+):cation antiporter (CaCA) (TC 2.A.19) family. Cation/proton exchanger (CAX) subfamily. In terms of tissue distribution, ubiquitous.

The protein localises to the vacuole membrane. Its function is as follows. Vacuolar cation/proton exchanger (CAX). Translocates Ca(2+) and other metal ions into vacuoles using the proton gradient formed by H(+)-ATPase and H(+)-pyrophosphatase. This is Vacuolar cation/proton exchanger 1a (CAX1a) from Oryza sativa subsp. japonica (Rice).